Consider the following 365-residue polypeptide: MWLQHLSLKTFRNYKETKIDFNPKLNVFLGRNAQGKTNMLEAIYFLALTRSHRTQTDKNLIHFDEEQLHLSGLVQKKTGSIPLEIELTQKGRVTKVNHLKQARLSDYVGHMNVVLFAPEDLQLIKGAPSIRRKFIDMELGQIKPIYLSDLTNYNHILKQRNTYLKSAQKIDETFLSVLDDQLVDYGCRVMNHRLDFIKKLESFGRKKHFELSNQIEELSISYQPSVNITDKQNLSESFKIALEKSRSRDLFKKNTGVGPHRDDISFYINGMDASFGSQGQHRSLVLSIKLAEIELMESITTESPILLLDDVMSELDNTRQLKLLETISQSIQTFITTTSLDHLQNLPENLSIFTIQDGKAAVNGN.

30–37 (GRNAQGKT) serves as a coordination point for ATP.

The protein belongs to the RecF family.

Its subcellular location is the cytoplasm. Functionally, the RecF protein is involved in DNA metabolism; it is required for DNA replication and normal SOS inducibility. RecF binds preferentially to single-stranded, linear DNA. It also seems to bind ATP. This is DNA replication and repair protein RecF from Streptococcus pneumoniae (strain CGSP14).